The following is a 629-amino-acid chain: Interleukin-23 receptor (629 aa).

A signal peptide spans 1-23 (MNQVTIQWDAVIALYILFSWCHG). At 24–355 (GITNINCSGH…LTSDNRGDIG (332 aa)) the chain is on the extracellular side. The N-linked (GlcNAc...) asparagine; partial glycan is linked to Asn-29. N-linked (GlcNAc...) asparagine glycosylation is found at Asn-47, Asn-81, and Asn-141. 2 consecutive Fibronectin type-III domains span residues 127–217 (IPDE…LDDI) and 219–318 (IPSA…TPET). Asn-180 carries an N-linked (GlcNAc...) (high mannose) asparagine glycan. N-linked (GlcNAc...) asparagine glycosylation is found at Asn-232 and Asn-262. Asn-273 is a glycosylation site (N-linked (GlcNAc...) asparagine; partial). Residues 356–376 (LLLGMIVFAVMLSILSLIGIF) traverse the membrane as a helical segment. The Cytoplasmic portion of the chain corresponds to 377-629 (NRSFRTGIKR…HFNRISLLEK (253 aa)).

This sequence belongs to the type I cytokine receptor family. Type 2 subfamily. Heterodimer with IL12RB1. In presence of IL23, the heterodimer forms the IL23 receptor. Interacts with JAK2 and in presence of IL23 with STAT3. In terms of processing, phosphorylated in response to IL23. As to expression, expressed by monocytes, Th1, Th0, NK and dendritic cells. Isoform 1 is specifically expressed in NK cells.

Its subcellular location is the cell membrane. In terms of biological role, associates with IL12RB1 to form the interleukin-23 receptor. Binds IL23 and mediates T-cells, NK cells and possibly certain macrophage/myeloid cells stimulation probably through activation of the Jak-Stat signaling cascade. IL23 functions in innate and adaptive immunity and may participate in acute response to infection in peripheral tissues. IL23 may be responsible for autoimmune inflammatory diseases and be important for tumorigenesis. This is Interleukin-23 receptor (IL23R) from Homo sapiens (Human).